The chain runs to 432 residues: MTNASTESFFNRSLADVDPEIFGAIGKELGRQRHEIELIASENIVSRAVLEAQGSIMTNKYAEGYPGKRYYGGCQFVDIAEELAIERAKKLFGVNFANVQPNSGSQMNQAVFLALLQPGDTFMGLDLNSGGHLTHGSPVNMSGKWFNVVSYGVREGDNLLDMDEVARKAEEHKPKVIIAGGTAYSRIWDWKRFREIADSVGAYLMVDMAHIAGLVAGGQHPSPFPHCHVATTTTHKSLRGPRGGVILTNEEDLAKKFNSAVFPGLQGGPLMHIIAAKAVAFGEALQPEFKEYAAQIVKNARALAETLIAGGLDVVSGGTDNHLMLVDLRKKNATGKRAEAALGRAYITCNKNGIPFDPEKPFVTSGVRLGAPAGTTRGFKEAEFREIGNLIVEVLDGLKVANSDDGNAAVEAAVRGKVVNLTDRFPMYDYMG.

Residues leucine 127 and 131–133 (GHL) each bind (6S)-5,6,7,8-tetrahydrofolate. Position 236 is an N6-(pyridoxal phosphate)lysine (lysine 236).

This sequence belongs to the SHMT family. As to quaternary structure, homodimer. The cofactor is pyridoxal 5'-phosphate.

It is found in the cytoplasm. The enzyme catalyses (6R)-5,10-methylene-5,6,7,8-tetrahydrofolate + glycine + H2O = (6S)-5,6,7,8-tetrahydrofolate + L-serine. The protein operates within one-carbon metabolism; tetrahydrofolate interconversion. Its pathway is amino-acid biosynthesis; glycine biosynthesis; glycine from L-serine: step 1/1. Its function is as follows. Catalyzes the reversible interconversion of serine and glycine with tetrahydrofolate (THF) serving as the one-carbon carrier. This reaction serves as the major source of one-carbon groups required for the biosynthesis of purines, thymidylate, methionine, and other important biomolecules. Also exhibits THF-independent aldolase activity toward beta-hydroxyamino acids, producing glycine and aldehydes, via a retro-aldol mechanism. The protein is Serine hydroxymethyltransferase of Rhizobium etli (strain ATCC 51251 / DSM 11541 / JCM 21823 / NBRC 15573 / CFN 42).